The following is a 189-amino-acid chain: Small ribosomal subunit protein uS5 (189 aa).

The 64-residue stretch at 22–85 (FVDKLVAINR…EAAKRDLIFV (64 aa)) folds into the S5 DRBM domain.

It belongs to the universal ribosomal protein uS5 family. In terms of assembly, part of the 30S ribosomal subunit. Contacts proteins S4 and S8.

Functionally, with S4 and S12 plays an important role in translational accuracy. In terms of biological role, located at the back of the 30S subunit body where it stabilizes the conformation of the head with respect to the body. This is Small ribosomal subunit protein uS5 from Sinorhizobium medicae (strain WSM419) (Ensifer medicae).